Reading from the N-terminus, the 234-residue chain is Sugar fermentation stimulation protein A (234 aa).

The segment at residues 201-220 is a DNA-binding region (H-T-H motif); that stretch reads LLSEAQQRGVEILAYKAELS.

This sequence belongs to the SfsA family.

Functionally, binds to DNA non-specifically. Could be a regulatory factor involved in maltose metabolism. In Escherichia coli (strain SMS-3-5 / SECEC), this protein is Sugar fermentation stimulation protein A.